Here is a 128-residue protein sequence, read N- to C-terminus: Aspartate 1-decarboxylase (128 aa).

The active-site Schiff-base intermediate with substrate; via pyruvic acid is the Ser-25. Residue Ser-25 is modified to Pyruvic acid (Ser). Thr-57 lines the substrate pocket. Tyr-58 (proton donor) is an active-site residue. 73-75 (GSA) lines the substrate pocket.

It belongs to the PanD family. Heterooctamer of four alpha and four beta subunits. The cofactor is pyruvate. Is synthesized initially as an inactive proenzyme, which is activated by self-cleavage at a specific serine bond to produce a beta-subunit with a hydroxyl group at its C-terminus and an alpha-subunit with a pyruvoyl group at its N-terminus.

It is found in the cytoplasm. The catalysed reaction is L-aspartate + H(+) = beta-alanine + CO2. It functions in the pathway cofactor biosynthesis; (R)-pantothenate biosynthesis; beta-alanine from L-aspartate: step 1/1. Catalyzes the pyruvoyl-dependent decarboxylation of aspartate to produce beta-alanine. The protein is Aspartate 1-decarboxylase of Burkholderia cenocepacia (strain HI2424).